The following is a 256-amino-acid chain: MRNMASLSSSLVLLLAALILSPQVLADYEKPPIYKPPVYTPPVYKPPVEKPPVYKPPVYKPPVEKPPVYKPPVYKPPIYKPPVYKPPVEKPPVYKPPVYKPPVYKPPVYKPPIEKPPVYKPPVYKPPVYKPPVYKPPVYKPPVYKPPVEKPPVYKPPVYKPPVYKPPVYKPPVEKPPVYKPPVYKPPVYKPPVYKPPVEKPPIYKPPVYKPPIEKPPVYKPPVYKPPVYKPPVYKPPVKKPPIYKPPYPKYPPGSN.

A signal peptide spans 1-26 (MRNMASLSSSLVLLLAALILSPQVLA). 44 tandem repeats follow at residues 31–35 (PPIYK), 36–40 (PPVYT), 41–45 (PPVYK), 46–50 (PPVEK), 51–55 (PPVYK), 56–60 (PPVYK), 61–65 (PPVEK), 66–70 (PPVYK), 71–75 (PPVYK), 76–80 (PPIYK), 81–85 (PPVYK), 86–90 (PPVEK), 91–95 (PPVYK), 96–100 (PPVYK), 101–105 (PPVYK), 106–110 (PPVYK), 111–115 (PPIEK), 116–120 (PPVYK), 121–125 (PPVYK), 126–130 (PPVYK), 131–135 (PPVYK), 136–140 (PPVYK), 141–145 (PPVYK), 146–150 (PPVEK), 151–155 (PPVYK), 156–160 (PPVYK), 161–165 (PPVYK), 166–170 (PPVYK), 171–175 (PPVEK), 176–180 (PPVYK), 181–185 (PPVYK), 186–190 (PPVYK), 191–195 (PPVYK), 196–200 (PPVEK), 201–205 (PPIYK), 206–210 (PPVYK), 211–215 (PPIEK), 216–220 (PPVYK), 221–225 (PPVYK), 226–230 (PPVYK), 231–235 (PPVYK), 236–240 (PPVKK), 241–245 (PPIYK), and 246–250 (PPYPK). The 44 X 5 AA tandem repeats of P-P-[VIY]-[EYKP]-[KT] stretch occupies residues 31 to 250 (PPIYKPPVYT…PPIYKPPYPK (220 aa)). Residues 233–256 (VYKPPVKKPPIYKPPYPKYPPGSN) are disordered.

This sequence belongs to the plant proline-rich protein superfamily. ENOD12 family.

It is found in the secreted. The protein resides in the cell wall. Its function is as follows. This is a developmentally regulated putative cell wall protein. The sequence is that of Repetitive proline-rich cell wall protein 1 (PRP1) from Glycine max (Soybean).